The primary structure comprises 121 residues: Ragulator complex protein LAMTOR4 homolog (121 aa).

The interval Thr91–Ala121 is disordered. Residues Asn112–Ala121 are compositionally biased toward polar residues.

Belongs to the LAMTOR4 family. Part of the Ragulator complex.

The protein localises to the lysosome. Its function is as follows. Regulator of the TOR pathway, a signaling cascade that promotes cell growth in response to growth factors, energy levels, and amino acids. As part of the Ragulator complex, may activate the TOR signaling cascade in response to amino acids. This is Ragulator complex protein LAMTOR4 homolog from Drosophila pseudoobscura pseudoobscura (Fruit fly).